A 395-amino-acid polypeptide reads, in one-letter code: 8-amino-7-oxononanoate synthase (395 aa).

R24 lines the substrate pocket. G111–F112 is a binding site for pyridoxal 5'-phosphate. Substrate is bound at residue H136. Residues S184, D209–H212, and T240–K243 each bind pyridoxal 5'-phosphate. Residue K243 is modified to N6-(pyridoxal phosphate)lysine. T357 serves as a coordination point for substrate.

Belongs to the class-II pyridoxal-phosphate-dependent aminotransferase family. BioF subfamily. In terms of assembly, homodimer. Pyridoxal 5'-phosphate is required as a cofactor.

It carries out the reaction 6-carboxyhexanoyl-[ACP] + L-alanine + H(+) = (8S)-8-amino-7-oxononanoate + holo-[ACP] + CO2. Its pathway is cofactor biosynthesis; biotin biosynthesis. In terms of biological role, catalyzes the decarboxylative condensation of pimeloyl-[acyl-carrier protein] and L-alanine to produce 8-amino-7-oxononanoate (AON), [acyl-carrier protein], and carbon dioxide. The sequence is that of 8-amino-7-oxononanoate synthase from Alkaliphilus metalliredigens (strain QYMF).